The primary structure comprises 224 residues: GrpE protein homolog 2, mitochondrial (224 aa).

The N-terminal 31 residues, Met-1–Phe-31, are a transit peptide targeting the mitochondrion. Lys-141 carries the post-translational modification N6-acetyllysine.

It belongs to the GrpE family. As to quaternary structure, probable component of the PAM complex at least composed of a mitochondrial HSP70 protein, GRPEL1 or GRPEL2, TIMM44, TIMM16/PAM16 and TIMM14/DNAJC19. In terms of tissue distribution, ubiquitous.

The protein localises to the mitochondrion matrix. Its function is as follows. Essential component of the PAM complex, a complex required for the translocation of transit peptide-containing proteins from the inner membrane into the mitochondrial matrix in an ATP-dependent manner. Seems to control the nucleotide-dependent binding of mitochondrial HSP70 to substrate proteins. Stimulates ATPase activity of mt-HSP70. May also serve to modulate the interconversion of oligomeric (inactive) and monomeric (active) forms of mt-HSP70. This is GrpE protein homolog 2, mitochondrial (Grpel2) from Mus musculus (Mouse).